A 619-amino-acid chain; its full sequence is Zinc finger CCCH domain-containing protein 67 (619 aa).

ANK repeat units lie at residues 52–81 and 88–120; these read EPLT…LVDP and SLST…DPAL. C3H1-type zinc fingers lie at residues 213-241 and 249-273; these read HYSC…HGVF and QYRT…HTPD. The tract at residues 308 to 341 is disordered; that stretch reads SPGSSSFTPPLSPSAGGGGGGGGGSGGGGAWPQQ. A compositionally biased stretch (gly residues) spans 322–337; that stretch reads AGGGGGGGGGSGGGGA.

This chain is Zinc finger CCCH domain-containing protein 67, found in Oryza sativa subsp. japonica (Rice).